The sequence spans 164 residues: Transcriptional repressor NrdR (164 aa).

The segment at 3 to 34 (CPFCRHDDTQVVDSRVSEDGAAIRRRRRCPAC) is a zinc-finger region. Positions 49–139 (PSVVKKDGSR…VYRRFEDVSE (91 aa)) constitute an ATP-cone domain.

The protein belongs to the NrdR family. Zn(2+) is required as a cofactor.

Negatively regulates transcription of bacterial ribonucleotide reductase nrd genes and operons by binding to NrdR-boxes. The polypeptide is Transcriptional repressor NrdR (Paraburkholderia phymatum (strain DSM 17167 / CIP 108236 / LMG 21445 / STM815) (Burkholderia phymatum)).